We begin with the raw amino-acid sequence, 236 residues long: Probable apoptosis inhibitor 2 (236 aa).

Residues 85 to 150 (RKRSFASFKW…AHAADCAFRR (66 aa)) form a BIR repeat. Residues Cys-123, Cys-126, His-142, and Cys-146 each coordinate Zn(2+). The RING-type zinc finger occupies 189-223 (CKVCFVNEKSVCFLPCRHLVVCAECSPRCKRCCVC).

The sequence is that of Probable apoptosis inhibitor 2 (IAP2) from Orgyia pseudotsugata multicapsid polyhedrosis virus (OpMNPV).